We begin with the raw amino-acid sequence, 258 residues long: uncharacterized protein (258 aa).

This is an uncharacterized protein from Acidianus filamentous virus 2 (isolate Italy/Pozzuoli) (AFV-2).